The following is a 114-amino-acid chain: Ribulose bisphosphate carboxylase small subunit 2 (114 aa).

It belongs to the RuBisCO small chain family. In terms of assembly, heterohexadecamer of 8 large and 8 small subunits. Forms a CsoS2-CsoS1-RuBisCO complex.

It is found in the carboxysome. Functionally, ruBisCO catalyzes two reactions: the carboxylation of D-ribulose 1,5-bisphosphate, the primary event in carbon dioxide fixation, as well as the oxidative fragmentation of the pentose substrate. Both reactions occur simultaneously and in competition at the same active site. Although the small subunit is not catalytic it is essential for maximal activity. Its function is as follows. Replacing the endogenous type I ccbLS genes in H.neapolitanus with this carboxysomally targeted enzyme reconstitutes RuBisCO with about 25% of normal activity; the active enzyme is targeted to carboxysomes. The polypeptide is Ribulose bisphosphate carboxylase small subunit 2 (Hydrogenovibrio crunogenus (strain DSM 25203 / XCL-2) (Thiomicrospira crunogena)).